The chain runs to 390 residues: tRNA(Met) cytidine acetate ligase (390 aa).

Residues 7–20 (VVEY…HKLH), G101, N162, and R187 each bind ATP.

This sequence belongs to the TmcAL family.

It localises to the cytoplasm. It catalyses the reaction cytidine(34) in elongator tRNA(Met) + acetate + ATP = N(4)-acetylcytidine(34) in elongator tRNA(Met) + AMP + diphosphate. Catalyzes the formation of N(4)-acetylcytidine (ac(4)C) at the wobble position of elongator tRNA(Met), using acetate and ATP as substrates. First activates an acetate ion to form acetyladenylate (Ac-AMP) and then transfers the acetyl group to tRNA to form ac(4)C34. The chain is tRNA(Met) cytidine acetate ligase from Listeria monocytogenes serotype 4b (strain F2365).